Consider the following 373-residue polypeptide: Probable protein phosphatase 2C 73 (373 aa).

In terms of domain architecture, PPM-type phosphatase spans 61-354; the sequence is LASLFSKRGE…DDMSVVCLFL (294 aa). Residues Asp-97, Gly-98, Asp-299, and Asp-345 each contribute to the Mn(2+) site.

Belongs to the PP2C family. It depends on Mg(2+) as a cofactor. Requires Mn(2+) as cofactor.

It catalyses the reaction O-phospho-L-seryl-[protein] + H2O = L-seryl-[protein] + phosphate. The catalysed reaction is O-phospho-L-threonyl-[protein] + H2O = L-threonyl-[protein] + phosphate. The chain is Probable protein phosphatase 2C 73 (PPC6-7) from Arabidopsis thaliana (Mouse-ear cress).